A 148-amino-acid chain; its full sequence is Aspartate carbamoyltransferase regulatory chain (148 aa).

The Zn(2+) site is built by C106, C111, C134, and C137.

This sequence belongs to the PyrI family. In terms of assembly, contains catalytic and regulatory chains. Zn(2+) is required as a cofactor.

Involved in allosteric regulation of aspartate carbamoyltransferase. The protein is Aspartate carbamoyltransferase regulatory chain of Methanococcus maripaludis (strain C7 / ATCC BAA-1331).